The sequence spans 509 residues: 2,3-bisphosphoglycerate-independent phosphoglycerate mutase (509 aa).

Mn(2+)-binding residues include D12 and S62. S62 serves as the catalytic Phosphoserine intermediate. Substrate is bound by residues H123, R153–D154, R185, R191, R260–R263, and K333. Positions 400, 404, 441, 442, and 460 each coordinate Mn(2+).

This sequence belongs to the BPG-independent phosphoglycerate mutase family. As to quaternary structure, monomer. Mn(2+) serves as cofactor.

The catalysed reaction is (2R)-2-phosphoglycerate = (2R)-3-phosphoglycerate. It participates in carbohydrate degradation; glycolysis; pyruvate from D-glyceraldehyde 3-phosphate: step 3/5. Catalyzes the interconversion of 2-phosphoglycerate and 3-phosphoglycerate. This chain is 2,3-bisphosphoglycerate-independent phosphoglycerate mutase, found in Clostridium botulinum (strain ATCC 19397 / Type A).